Here is a 304-residue protein sequence, read N- to C-terminus: UDP-3-O-acyl-N-acetylglucosamine deacetylase (304 aa).

His-78, His-237, and Asp-241 together coordinate Zn(2+). Residue His-264 is the Proton donor of the active site.

This sequence belongs to the LpxC family. It depends on Zn(2+) as a cofactor.

The catalysed reaction is a UDP-3-O-[(3R)-3-hydroxyacyl]-N-acetyl-alpha-D-glucosamine + H2O = a UDP-3-O-[(3R)-3-hydroxyacyl]-alpha-D-glucosamine + acetate. It participates in glycolipid biosynthesis; lipid IV(A) biosynthesis; lipid IV(A) from (3R)-3-hydroxytetradecanoyl-[acyl-carrier-protein] and UDP-N-acetyl-alpha-D-glucosamine: step 2/6. Catalyzes the hydrolysis of UDP-3-O-myristoyl-N-acetylglucosamine to form UDP-3-O-myristoylglucosamine and acetate, the committed step in lipid A biosynthesis. In Methylococcus capsulatus (strain ATCC 33009 / NCIMB 11132 / Bath), this protein is UDP-3-O-acyl-N-acetylglucosamine deacetylase.